Reading from the N-terminus, the 293-residue chain is Extracellular metalloprotease MGYG_00389 (293 aa).

A signal peptide spans 1–19 (MRFSVFLPAIAALSSAVAA). N-linked (GlcNAc...) asparagine glycans are attached at residues asparagine 49 and asparagine 53. Histidine 184 lines the Zn(2+) pocket. The active site involves glutamate 185. A Zn(2+)-binding site is contributed by histidine 188. Residues cysteine 223 and cysteine 249 are joined by a disulfide bond. The disordered stretch occupies residues 270 to 293 (GSGSGSVTRPRPKPPVLMDYEHRL).

It belongs to the peptidase M43B family.

Its subcellular location is the secreted. In terms of biological role, secreted metalloproteinase that allows assimilation of proteinaceous substrates. Plays a pivotal role as a pathogenicity determinant during infections and contributes to the ability of the pathogen to persist within the mammalian host. The polypeptide is Extracellular metalloprotease MGYG_00389 (Arthroderma gypseum (strain ATCC MYA-4604 / CBS 118893) (Microsporum gypseum)).